Reading from the N-terminus, the 34-residue chain is Photosystem II reaction center protein T (34 aa).

The chain crosses the membrane as a helical span at residues alanine 3–phenylalanine 23.

It belongs to the PsbT family. In terms of assembly, PSII is composed of 1 copy each of membrane proteins PsbA, PsbB, PsbC, PsbD, PsbE, PsbF, PsbH, PsbI, PsbJ, PsbK, PsbL, PsbM, PsbT, PsbY, PsbZ, Psb30/Ycf12, at least 3 peripheral proteins of the oxygen-evolving complex and a large number of cofactors. It forms dimeric complexes.

The protein localises to the plastid. Its subcellular location is the chloroplast thylakoid membrane. Its function is as follows. Found at the monomer-monomer interface of the photosystem II (PS II) dimer, plays a role in assembly and dimerization of PSII. PSII is a light-driven water plastoquinone oxidoreductase, using light energy to abstract electrons from H(2)O, generating a proton gradient subsequently used for ATP formation. The polypeptide is Photosystem II reaction center protein T (Solanum bulbocastanum (Wild potato)).